A 121-amino-acid polypeptide reads, in one-letter code: Cell division protein FtsB (121 aa).

Residues 1–6 lie on the Cytoplasmic side of the membrane; that stretch reads MRNWRW. Residues 7–24 form a helical membrane-spanning segment; sequence LLLVLAVLLAWLQYRFWF. The Periplasmic portion of the chain corresponds to 25–121; sequence GPGNSGEVMM…PASTDPVDHP (97 aa). Positions 31–66 form a coiled coil; it reads EVMMLEAQVAHQTQDNEGLRQRNQALAAEVKDLKDG. A disordered region spans residues 94-121; sequence APLPAPASPETAAPAQQAPASTDPVDHP. A compositionally biased stretch (low complexity) spans 101 to 121; the sequence is SPETAAPAQQAPASTDPVDHP.

The protein belongs to the FtsB family. Part of a complex composed of FtsB, FtsL and FtsQ.

It localises to the cell inner membrane. Its function is as follows. Essential cell division protein. May link together the upstream cell division proteins, which are predominantly cytoplasmic, with the downstream cell division proteins, which are predominantly periplasmic. The protein is Cell division protein FtsB of Xanthomonas oryzae pv. oryzae (strain MAFF 311018).